The chain runs to 155 residues: Endoribonuclease YbeY (155 aa).

3 residues coordinate Zn(2+): H114, H118, and H124.

This sequence belongs to the endoribonuclease YbeY family. The cofactor is Zn(2+).

The protein resides in the cytoplasm. In terms of biological role, single strand-specific metallo-endoribonuclease involved in late-stage 70S ribosome quality control and in maturation of the 3' terminus of the 16S rRNA. The polypeptide is Endoribonuclease YbeY (Citrobacter koseri (strain ATCC BAA-895 / CDC 4225-83 / SGSC4696)).